Here is a 348-residue protein sequence, read N- to C-terminus: MSIEWIQGACAVPDARVQAASLARQEQLTKPPGALGRLEQLAVQFAAWQRNEQPTVQRIWIAVYAADHGVAAEGVSMFPQAVTGEMVRNFARGGAAIAVLARELGARLEVVNLGVVNDPGELPRVRRAWIAPACANICEQAAMTPAQLRDALAAGAESIAQARTCGTQLFVGGEMGIGNSTAAAALSCALLSQFPQAMAGAGTGLDAEGIAHKATVITRALAVHADAATPLERLRRLGGFEIAALVGAYIAAAQAGIPVLVDGFISTAAALVAVHLNPGVREWLLFGHRSQERGHAALLRALEAEPLLQLDLRLGEASGAAVAIPLLRTACALHNGMATFAEAGVSDA.

Glu-316 (proton acceptor) is an active-site residue.

It belongs to the CobT family.

The catalysed reaction is 5,6-dimethylbenzimidazole + nicotinate beta-D-ribonucleotide = alpha-ribazole 5'-phosphate + nicotinate + H(+). It functions in the pathway nucleoside biosynthesis; alpha-ribazole biosynthesis; alpha-ribazole from 5,6-dimethylbenzimidazole: step 1/2. Its function is as follows. Catalyzes the synthesis of alpha-ribazole-5'-phosphate from nicotinate mononucleotide (NAMN) and 5,6-dimethylbenzimidazole (DMB). The chain is Nicotinate-nucleotide--dimethylbenzimidazole phosphoribosyltransferase from Xanthomonas campestris pv. campestris (strain 8004).